The sequence spans 156 residues: Large ribosomal subunit protein uL23 (156 aa).

Residues 1–19 (MAPKAKKEAPAPPKAEAKA) are compositionally biased toward basic and acidic residues. Residues 1–67 (MAPKAKKEAP…PKYPRKSAPR (67 aa)) are disordered. The residue at position 2 (alanine 2) is a N,N,N-trimethylalanine. Lysine 14 participates in a covalent cross-link: Glycyl lysine isopeptide (Lys-Gly) (interchain with G-Cter in SUMO2). Over residues 20 to 67 (KALKAKKAVLKGVHSHKKKKIRTSPTFRRPKTLRLRRQPKYPRKSAPR) the composition is skewed to basic residues. The beta-like import receptor binding (BIB) domain stretch occupies residues 32–74 (VHSHKKKKIRTSPTFRRPKTLRLRRQPKYPRKSAPRRNKLDHY). At arginine 41 the chain carries Citrulline. Serine 43 is subject to Phosphoserine. Threonine 45 is modified (phosphothreonine). At lysine 70 the chain carries N6-acetyllysine.

The protein belongs to the universal ribosomal protein uL23 family. As to quaternary structure, component of the large ribosomal subunit. Interacts with LYAR and GNL2. Interacts with MDM2; this interaction may promote MDM2-mediated p53/TP53 polyubiquitination. Directly interacts (via BIB domain) with IPO5, IPO7, KPNB1 and TNPO1; these interactions are involved in RPL23A nuclear import for the assembly of ribosomal subunits. Interacts with IPO8. N-terminus is methylated by METTL11A/NTM1. In terms of processing, citrullinated by PADI4.

It is found in the cytoplasm. It localises to the nucleus. In terms of biological role, component of the large ribosomal subunit. The ribosome is a large ribonucleoprotein complex responsible for the synthesis of proteins in the cell. Binds a specific region on the 26S rRNA. May promote p53/TP53 degradation possibly through the stimulation of MDM2-mediated TP53 polyubiquitination. This is Large ribosomal subunit protein uL23 (RPL23A) from Bos taurus (Bovine).